The following is a 302-amino-acid chain: Methionyl-tRNA formyltransferase (302 aa).

Residue 108–111 participates in (6S)-5,6,7,8-tetrahydrofolate binding; that stretch reads SLLP. The segment covering 276–288 has biased composition (basic and acidic residues); that stretch reads REGKRPMEPEEFL. Residues 276–302 are disordered; sequence REGKRPMEPEEFLRGFPLPEGSRAHTA.

It belongs to the Fmt family.

The catalysed reaction is L-methionyl-tRNA(fMet) + (6R)-10-formyltetrahydrofolate = N-formyl-L-methionyl-tRNA(fMet) + (6S)-5,6,7,8-tetrahydrofolate + H(+). Attaches a formyl group to the free amino group of methionyl-tRNA(fMet). The formyl group appears to play a dual role in the initiator identity of N-formylmethionyl-tRNA by promoting its recognition by IF2 and preventing the misappropriation of this tRNA by the elongation apparatus. The chain is Methionyl-tRNA formyltransferase from Cereibacter sphaeroides (strain ATCC 17029 / ATH 2.4.9) (Rhodobacter sphaeroides).